We begin with the raw amino-acid sequence, 502 residues long: Acetylcholine receptor subunit alpha-type unc-63 (502 aa).

The N-terminal stretch at 1-23 is a signal peptide; that stretch reads MGPNDHGFAYILIFLLLSPPTHA. At 24–263 the chain is on the extracellular side; sequence NRDANRLFED…HLRRKTLFYT (240 aa). Asn-136 carries an N-linked (GlcNAc...) asparagine glycan. Cys-151 and Cys-165 are oxidised to a cystine. Transmembrane regions (helical) follow at residues 264–284, 293–313, and 326–346; these read VNLI…FYLP, LCIS…EIIP, and LLFT…TLNV. Over 347 to 470 the chain is Cytoplasmic; sequence HYRSPTTHTM…WKYISVVMDR (124 aa). The helical transmembrane segment at 471–491 threads the bilayer; the sequence is IFLITFTFACAFGTVVIIARA.

The protein belongs to the ligand-gated ion channel (TC 1.A.9) family. Acetylcholine receptor (TC 1.A.9.1) subfamily. Component of nicotinic acetylcholine receptor. In muscles, composed of 2 non-alpha subunits lev-1 and unc-29, and 3 alpha subunits unc-38, unc-63 and lev-8. In cholinergic motoneurons, composed of 2 non-alpha subunits acr-2 and acr-3, and 3 alpha subunits unc-38, unc-63 and acr-12. Interacts with lev-10. Expressed in body wall muscles, in vulval muscles and in neurons.

It localises to the postsynaptic cell membrane. Its subcellular location is the cell membrane. Its function is as follows. Alpha subunit of nicotinic acetylcholine receptor (nAChR). Probably acts in cholinergic motoneurons to regulate presynaptic neurotransmitter release, thereby ensuring normal level of excitation of cholinergic motoneurons during locomotion. Involved in nAChR sensitivity to nicotine and levamisole. The sequence is that of Acetylcholine receptor subunit alpha-type unc-63 (unc-63) from Caenorhabditis elegans.